We begin with the raw amino-acid sequence, 175 residues long: Urease accessory protein UreE (175 aa).

The disordered stretch occupies residues 134–175 (FQPESGAYGGGHHHGDESATDLHNPGHGPHRSVPKIHEFKPR).

Belongs to the UreE family.

Its subcellular location is the cytoplasm. Involved in urease metallocenter assembly. Binds nickel. Probably functions as a nickel donor during metallocenter assembly. The chain is Urease accessory protein UreE from Dechloromonas aromatica (strain RCB).